The primary structure comprises 218 residues: uncharacterized protein (218 aa).

Residues arginine 7–alanine 123 enclose the Response regulatory domain. Position 58 is a 4-aspartylphosphate (aspartate 58). The HTH luxR-type domain maps to alanine 150–glycine 215. The segment at residues asparagine 174 to histidine 193 is a DNA-binding region (H-T-H motif).

Phosphorylated by YxjM.

The protein localises to the cytoplasm. Its function is as follows. Probable member of the two-component regulatory system YxjM/YxjL. This is an uncharacterized protein from Bacillus subtilis (strain 168).